A 341-amino-acid chain; its full sequence is Glycerol-3-phosphate dehydrogenase [NAD(P)+] (341 aa).

Positions 14, 15, 35, and 108 each coordinate NADPH. Residues Lys108 and Gly136 each coordinate sn-glycerol 3-phosphate. Residue Ser140 participates in NADPH binding. Sn-glycerol 3-phosphate is bound by residues Lys191, Asp244, Ser254, Arg255, and Asn256. Lys191 serves as the catalytic Proton acceptor. Arg255 lines the NADPH pocket. NADPH contacts are provided by Val279 and Glu281.

It belongs to the NAD-dependent glycerol-3-phosphate dehydrogenase family.

It localises to the cytoplasm. It catalyses the reaction sn-glycerol 3-phosphate + NAD(+) = dihydroxyacetone phosphate + NADH + H(+). It carries out the reaction sn-glycerol 3-phosphate + NADP(+) = dihydroxyacetone phosphate + NADPH + H(+). Its pathway is membrane lipid metabolism; glycerophospholipid metabolism. Functionally, catalyzes the reduction of the glycolytic intermediate dihydroxyacetone phosphate (DHAP) to sn-glycerol 3-phosphate (G3P), the key precursor for phospholipid synthesis. The sequence is that of Glycerol-3-phosphate dehydrogenase [NAD(P)+] from Pseudomonas putida (strain GB-1).